Reading from the N-terminus, the 437-residue chain is Ankyrin repeat domain-containing protein OPG015 (437 aa).

ANK repeat units follow at residues 117–146 (QDLL…VIYK), 220–249 (GGRT…NVNA), and 253–290 (NGYT…SIDC).

This sequence belongs to the orthopoxvirus OPG015 family.

May be involved in virus-host protein interaction through the ankyrin repeats. This is Ankyrin repeat domain-containing protein OPG015 (OPG015) from Monkeypox virus.